Consider the following 1128-residue polypeptide: Mastermind-like protein 2 (1128 aa).

Disordered regions lie at residues 1–22 (MGDT…GAGL) and 81–167 (QHGQ…GDQR). Over residues 12–22 (GGLGGAPGAGL) the composition is skewed to gly residues. Positions 113 to 122 (PTASQTAAPA) are enriched in low complexity. S177 bears the Phosphoserine mark. Disordered stretches follow at residues 343–509 (FNID…GSNQ), 521–649 (SPSA…SNQP), 677–714 (QVSQ…GYMN), 758–794 (QDQI…GSST), and 1039–1073 (GTGL…QGTD). Polar residues-rich tracts occupy residues 347–357 (LGQQSQRSTPR) and 374–387 (GLTQ…QLRP). A compositionally biased stretch (low complexity) spans 395 to 426 (SMASSGLSASSPIPSVPQSQAQPPPATGAARA). The segment covering 431–446 (QEVSHAQQLKQIAANR) has biased composition (polar residues). 2 stretches are compositionally biased toward low complexity: residues 453–473 (HQQQ…SAGP) and 484–497 (PSPS…SPQS). The span at 566–584 (NSDQANQQMPSVLPSQSKP) shows a compositional bias: polar residues. A compositionally biased stretch (low complexity) spans 590–649 (TQQQPQQSSITVQPQQQQQQPQQQQQPQQQQQPQPQQQQQQQPQAQQPAAQPTQPLSNQP). Polar residues-rich tracts occupy residues 677–695 (QVSQ…QNAG), 778–794 (NVGN…GSST), and 1039–1052 (GTGL…SQPP).

This sequence belongs to the mastermind family. Interacts through its N-terminal region with the ankyrin repeat region of the Notch proteins NOTCH1, NOTCH2, NOTCH3 and NOTCH4. Forms a DNA-binding complex with Notch proteins and RBPSUH/RBP-J kappa.

The protein localises to the nucleus speckle. In terms of biological role, acts as a transcriptional coactivator for NOTCH proteins. Has been shown to amplify NOTCH-induced transcription of HES1. Potentiates activation by NOTCH3 and NOTCH4 more efficiently than MAML1 or MAML3. This Bos taurus (Bovine) protein is Mastermind-like protein 2 (MAML2).